The following is a 489-amino-acid chain: Dipeptide and tripeptide permease B (489 aa).

Residues 1–27 lie on the Cytoplasmic side of the membrane; sequence MNKPASIGLLQQPKPFFMIFFVELWER. Residues 28–48 traverse the membrane as a helical segment; that stretch reads FGYYGVQGILAVYFVHKLGFS. Residues 49-52 lie on the Periplasmic side of the membrane; it reads QEQA. Residues 53–73 traverse the membrane as a helical segment; that stretch reads FTTFGAFAALVYGLIAIGGYV. Over 74–82 the chain is Cytoplasmic; sequence GDHLLGTKR. A helical membrane pass occupies residues 83–103; it reads TIVLGAIVLTVGYFMTGLSIL. At 104–106 the chain is on the periplasmic side; it reads KPE. Residues 107–127 form a helical membrane-spanning segment; that stretch reads LIFYALGTIAVGNGLFKANPA. Residues 128–146 lie on the Cytoplasmic side of the membrane; the sequence is SLLSKCYPPKDPRLDGAFT. The chain crosses the membrane as a helical span at residues 147–167; that stretch reads LFYMSINIGSLFSLAIAPVIA. Residues 168 to 171 are Periplasmic-facing; that stretch reads EKFG. A helical membrane pass occupies residues 172 to 192; that stretch reads YAVTYNICGIGLIIALLVYVL. The Cytoplasmic portion of the chain corresponds to 193–212; sequence YRNTVRNIGSEPDHRPINYK. 2 helical membrane passes run 213-233 and 234-254; these read NLLL…WLMH and NVKI…FIFF. The Cytoplasmic segment spans residues 255-267; sequence REAFKQDKVGRNK. The helical transmembrane segment at 268–288 threads the bilayer; sequence MFVAFILMLQAIVFFILYAQM. The Periplasmic segment spans residues 289–311; it reads PTSLNFFAINNVHHQLLGFNINP. A helical membrane pass occupies residues 312 to 332; it reads VSFQALNPFWIVVASPILAAL. At 333 to 350 the chain is on the cytoplasmic side; sequence YTHWGSRSKDLTMPAKFT. The helical transmembrane segment at 351–371 threads the bilayer; the sequence is VGMFLCSLGFLTAAAAGLWFA. Topologically, residues 372–375 are periplasmic; that stretch reads DEQG. A helical transmembrane segment spans residues 376–396; it reads LTSPWFIVLVYLFQSLGELMI. The Cytoplasmic portion of the chain corresponds to 397 to 419; sequence SALGLAMVAALVPQYLMGFILGM. Residues 420-440 traverse the membrane as a helical segment; it reads WYLTQATSFLLGGYVAAFTAI. Residues 441-456 are Periplasmic-facing; that stretch reads PEGITDPLETLPVYTN. A helical membrane pass occupies residues 457 to 477; the sequence is VFGKIGITTFIVAIIMAITVP. Over 478–489 the chain is Cytoplasmic; that stretch reads LLNRMMNGKQKA.

Belongs to the major facilitator superfamily. Proton-dependent oligopeptide transporter (POT/PTR) (TC 2.A.17) family. DtpB subfamily.

Its subcellular location is the cell inner membrane. Functionally, proton-dependent permease that transports di- and tripeptides. In Photorhabdus asymbiotica subsp. asymbiotica (strain ATCC 43949 / 3105-77) (Xenorhabdus luminescens (strain 2)), this protein is Dipeptide and tripeptide permease B.